Consider the following 562-residue polypeptide: Phosphoglucomutase-1 (562 aa).

Met1 carries the post-translational modification N-acetylmethionine. Lys16 carries the post-translational modification N6-acetyllysine. Arg23 serves as a coordination point for alpha-D-glucose 1,6-bisphosphate. At Thr115 the chain carries Phosphothreonine. Residue Ser117 coordinates alpha-D-glucose 1,6-bisphosphate. The active-site Phosphoserine intermediate is Ser117. Residue Ser117 participates in Mg(2+) binding. 2 positions are modified to phosphoserine: Ser117 and Ser134. Position 185 is a phosphothreonine (Thr185). At Ser213 the chain carries Phosphoserine. The Mg(2+) site is built by Asp288, Asp290, and Asp292. Asp292 and Arg293 together coordinate alpha-D-glucose 1,6-bisphosphate. Lys349 carries the post-translational modification N6-acetyllysine. Tyr353 carries the post-translational modification Phosphotyrosine. An alpha-D-glucose 1,6-bisphosphate-binding site is contributed by Thr357. A Phosphoserine modification is found at Ser369. Alpha-D-glucose 1,6-bisphosphate contacts are provided by Glu376, Ser378, and Lys389. A Phosphoserine modification is found at Ser378. Position 419 is an N6-succinyllysine (Lys419). Thr467 carries the phosphothreonine; by PAK1 modification. 2 positions are modified to phosphoserine: Ser485 and Ser505. Thr507 is subject to Phosphothreonine. 2 positions are modified to phosphoserine: Ser509 and Ser541.

This sequence belongs to the phosphohexose mutase family. Monomer. It depends on Mg(2+) as a cofactor. Isoform 2 is the major calmodulin-dependent phosphoprotein in junctional skeletal sarcoplasmic reticulum vesicles. In terms of processing, phosphorylation at Thr-467 by PAK1 significantly enhances enzymatic activity.

It is found in the cytoplasm. The protein localises to the sarcoplasmic reticulum. It catalyses the reaction alpha-D-glucose 1-phosphate = alpha-D-glucose 6-phosphate. The enzyme catalyses O-phospho-L-seryl-[protein] + alpha-D-glucose 1-phosphate = alpha-D-glucose 1,6-bisphosphate + L-seryl-[protein]. It carries out the reaction alpha-D-glucose 1,6-bisphosphate + L-seryl-[protein] = O-phospho-L-seryl-[protein] + alpha-D-glucose 6-phosphate. Glucose-1,6-bisphosphate enhances phosphorylation of the active site Ser-117, and thereby increases enzyme activity. Catalyzes the reversible isomerization of alpha-D-glucose 1-phosphate to alpha-D-glucose 6-phosphate. The mechanism proceeds via the intermediate compound alpha-D-glucose 1,6-bisphosphate. This enzyme participates in both the breakdown and synthesis of glucose. This Oryctolagus cuniculus (Rabbit) protein is Phosphoglucomutase-1 (PGM1).